The primary structure comprises 321 residues: D-alanine--D-alanine ligase (321 aa).

An ATP-grasp domain is found at 121 to 315 (RIWFLTNNIN…FTNLIEEIIK (195 aa)). Residue 147–199 (PMKRPYVIKPLTQGSSIGVEVIFAEDDFNFADYDFPYGDQVIIEQYIKGRELQ) coordinates ATP. Residues glutamate 268, glutamate 282, and asparagine 284 each coordinate Mg(2+).

Belongs to the D-alanine--D-alanine ligase family. Requires Mg(2+) as cofactor. It depends on Mn(2+) as a cofactor.

The protein localises to the cytoplasm. The catalysed reaction is 2 D-alanine + ATP = D-alanyl-D-alanine + ADP + phosphate + H(+). Its pathway is cell wall biogenesis; peptidoglycan biosynthesis. Cell wall formation. The polypeptide is D-alanine--D-alanine ligase (Rickettsia africae (strain ESF-5)).